Reading from the N-terminus, the 1126-residue chain is Ubiquitin carboxyl-terminal hydrolase 16/45 (1126 aa).

Over residues 1–15 (MVKKRQADSRDHDCS) the composition is skewed to basic and acidic residues. Positions 1 to 44 (MVKKRQADSRDHDCSTDSGNEDLHHRKGLGSPGQSDGATPTTAS) are disordered. Polar residues predominate over residues 32-44 (PGQSDGATPTTAS). The segment at 43–181 (ASCQHIKKAV…ELVKKLAQKP (139 aa)) adopts a UBP-type zinc-finger fold. Positions 45, 47, 70, 73, 111, 114, 119, 126, 130, 139, 152, and 155 each coordinate Zn(2+). Composition is skewed to low complexity over residues 215 to 229 (GGSF…SLAA) and 254 to 264 (SSGLSTSDSLT). The interval 215-264 (GGSFDDSSSRGSLAAAGGGGGVGSSRNRQVAIPMPPPEPSSGLSTSDSLT) is disordered. Catalysis depends on C315, which acts as the Nucleophile. Disordered stretches follow at residues 513–547 (KPQP…INTK), 570–762 (ASLG…SGSS), and 795–833 (EQGA…ARTK). The span at 524-539 (PELSLTSSSSSVTPST) shows a compositional bias: low complexity. A compositionally biased stretch (basic residues) spans 586–598 (QRKAKRAAKKRQK). Composition is skewed to low complexity over residues 599 to 614 (SSLN…GNEL) and 646 to 657 (TEDSTTSSVTTS). Positions 674–701 (APSTNNVPSSTASLTAPSKTYMDSNGNA) are enriched in polar residues. The segment covering 705 to 718 (GEKRDDTPEHMDKD) has biased composition (basic and acidic residues). The segment covering 730-762 (ATSPAPTATNSSTSTSATGNNNSVAGSGLSGSS) has biased composition (low complexity). Positions 807-816 (GEAKAIEQPE) are enriched in basic and acidic residues. Residues 821–830 (QAQAMAQAQA) are compositionally biased toward low complexity. Residue H984 is the Proton acceptor of the active site. Residues 1037-1089 (LKVLDDSDDFSNSSSNSSTSDESQTPATPLEEQQTQQAQQPQQPQQLEEAANV) are disordered. Low complexity predominate over residues 1046 to 1086 (FSNSSSNSSTSDESQTPATPLEEQQTQQAQQPQQPQQLEEA).

Belongs to the peptidase C19 family.

It catalyses the reaction Thiol-dependent hydrolysis of ester, thioester, amide, peptide and isopeptide bonds formed by the C-terminal Gly of ubiquitin (a 76-residue protein attached to proteins as an intracellular targeting signal).. Its function is as follows. Involved in the regulation of DNA damage repair. This chain is Ubiquitin carboxyl-terminal hydrolase 16/45, found in Drosophila melanogaster (Fruit fly).